A 407-amino-acid polypeptide reads, in one-letter code: Arrestin domain-containing protein 2 (407 aa).

The protein belongs to the arrestin family. In terms of assembly, interacts with WWP1 (via WW domains).

This is Arrestin domain-containing protein 2 (ARRDC2) from Homo sapiens (Human).